The sequence spans 131 residues: C-glycoside deglycosidase beta subunit (131 aa).

The protein belongs to the C-glycoside deglycosidase beta subunit family. As to quaternary structure, heterodimer composed of an alpha subunit (CarB1) and a beta subunit (CarC1). Mg(2+) is required as a cofactor.

It catalyses the reaction 3''-dehydroisovitexin = 1,5-anhydro-D-erythro-hex-1-en-3-ulose + apigenin. Its activity is regulated as follows. Activity is strongly reduced in the presence of chelating agents. In terms of biological role, carbon-carbon bond-cleaving enzyme which participates in the metabolism of C-glycosides. Acts on the C6-glycosylated compound 3''-dehydroisovitexin (3''-oxo-isovitexin). Shows weak activity with 3''-dehydroisoorientin (3''-oxo-homoorientin) and 3'-dehydromangiferin (3'-oxo-mangiferin). This is C-glycoside deglycosidase beta subunit from Arthrobacter globiformis (strain ATCC 8010 / DSM 20124 / JCM 1332 / NBRC 12137 / NCIMB 8907 / NRRL B-2979 / 168).